The primary structure comprises 81 residues: Large ribosomal subunit protein bL31B (81 aa).

This sequence belongs to the bacterial ribosomal protein bL31 family. Type B subfamily. As to quaternary structure, part of the 50S ribosomal subunit.

The sequence is that of Large ribosomal subunit protein bL31B from Exiguobacterium sibiricum (strain DSM 17290 / CCUG 55495 / CIP 109462 / JCM 13490 / 255-15).